A 247-amino-acid polypeptide reads, in one-letter code: NAD(P)H-quinone oxidoreductase subunit K, chloroplastic (247 aa).

[4Fe-4S] cluster-binding residues include Cys61, Cys62, Cys126, and Cys157.

Belongs to the complex I 20 kDa subunit family. As to quaternary structure, NDH is composed of at least 16 different subunits, 5 of which are encoded in the nucleus. [4Fe-4S] cluster is required as a cofactor.

It localises to the plastid. The protein resides in the chloroplast thylakoid membrane. It carries out the reaction a plastoquinone + NADH + (n+1) H(+)(in) = a plastoquinol + NAD(+) + n H(+)(out). It catalyses the reaction a plastoquinone + NADPH + (n+1) H(+)(in) = a plastoquinol + NADP(+) + n H(+)(out). NDH shuttles electrons from NAD(P)H:plastoquinone, via FMN and iron-sulfur (Fe-S) centers, to quinones in the photosynthetic chain and possibly in a chloroplast respiratory chain. The immediate electron acceptor for the enzyme in this species is believed to be plastoquinone. Couples the redox reaction to proton translocation, and thus conserves the redox energy in a proton gradient. The sequence is that of NAD(P)H-quinone oxidoreductase subunit K, chloroplastic from Anthoceros angustus (Hornwort).